The sequence spans 156 residues: 6,7-dimethyl-8-ribityllumazine synthase (156 aa).

5-amino-6-(D-ribitylamino)uracil is bound by residues phenylalanine 22, 57–59, and 81–83; these read AVE and TVI. 86–87 lines the (2S)-2-hydroxy-3-oxobutyl phosphate pocket; that stretch reads GT. Histidine 89 serves as the catalytic Proton donor. 5-amino-6-(D-ribitylamino)uracil is bound at residue phenylalanine 114. Residue arginine 128 coordinates (2S)-2-hydroxy-3-oxobutyl phosphate.

Belongs to the DMRL synthase family. In terms of assembly, forms an icosahedral capsid composed of 60 subunits, arranged as a dodecamer of pentamers.

The catalysed reaction is (2S)-2-hydroxy-3-oxobutyl phosphate + 5-amino-6-(D-ribitylamino)uracil = 6,7-dimethyl-8-(1-D-ribityl)lumazine + phosphate + 2 H2O + H(+). It functions in the pathway cofactor biosynthesis; riboflavin biosynthesis; riboflavin from 2-hydroxy-3-oxobutyl phosphate and 5-amino-6-(D-ribitylamino)uracil: step 1/2. In terms of biological role, catalyzes the formation of 6,7-dimethyl-8-ribityllumazine by condensation of 5-amino-6-(D-ribitylamino)uracil with 3,4-dihydroxy-2-butanone 4-phosphate. This is the penultimate step in the biosynthesis of riboflavin. This chain is 6,7-dimethyl-8-ribityllumazine synthase, found in Vibrio campbellii (strain ATCC BAA-1116).